Consider the following 631-residue polypeptide: 1-deoxy-D-xylulose-5-phosphate synthase (631 aa).

Thiamine diphosphate is bound by residues histidine 87 and 128–130; that span reads GHS. Aspartate 159 is a Mg(2+) binding site. Residues 160–161, asparagine 188, phenylalanine 295, and glutamate 377 contribute to the thiamine diphosphate site; that span reads GA. Asparagine 188 is a binding site for Mg(2+).

This sequence belongs to the transketolase family. DXPS subfamily. Homodimer. Mg(2+) is required as a cofactor. The cofactor is thiamine diphosphate.

It carries out the reaction D-glyceraldehyde 3-phosphate + pyruvate + H(+) = 1-deoxy-D-xylulose 5-phosphate + CO2. The protein operates within metabolic intermediate biosynthesis; 1-deoxy-D-xylulose 5-phosphate biosynthesis; 1-deoxy-D-xylulose 5-phosphate from D-glyceraldehyde 3-phosphate and pyruvate: step 1/1. In terms of biological role, catalyzes the acyloin condensation reaction between C atoms 2 and 3 of pyruvate and glyceraldehyde 3-phosphate to yield 1-deoxy-D-xylulose-5-phosphate (DXP). This chain is 1-deoxy-D-xylulose-5-phosphate synthase, found in Pseudomonas putida (strain ATCC 700007 / DSM 6899 / JCM 31910 / BCRC 17059 / LMG 24140 / F1).